We begin with the raw amino-acid sequence, 472 residues long: Phenylalanine--tRNA ligase, mitochondrial (472 aa).

Substrate is bound by residues 157-160, arginine 179, 186-188, and 193-195; these read SAHQ, QHY, and QLE. Lysine 202 is subject to N6-acetyllysine. Substrate-binding residues include glutamate 287 and phenylalanine 312. In terms of domain architecture, FDX-ACB spans 379–471; that stretch reads SKYPAVFNDI…AVQLLGVEGR (93 aa).

This sequence belongs to the class-II aminoacyl-tRNA synthetase family. In terms of assembly, monomer. As to expression, mainly expressed in the Purkinje cell of cerebellum.

The protein localises to the mitochondrion matrix. It localises to the mitochondrion. The catalysed reaction is tRNA(Phe) + L-phenylalanine + ATP = L-phenylalanyl-tRNA(Phe) + AMP + diphosphate + H(+). In terms of biological role, is responsible for the charging of tRNA(Phe) with phenylalanine in mitochondrial translation. To a lesser extent, also catalyzes direct attachment of m-Tyr (an oxidized version of Phe) to tRNA(Phe), thereby opening the way for delivery of the misacylated tRNA to the ribosome and incorporation of ROS-damaged amino acid into proteins. The chain is Phenylalanine--tRNA ligase, mitochondrial (Fars2) from Rattus norvegicus (Rat).